Consider the following 503-residue polypeptide: Probable cytosol aminopeptidase (503 aa).

Residues Lys-274 and Asp-279 each contribute to the Mn(2+) site. The active site involves Lys-286. Mn(2+) is bound by residues Asp-297, Asp-356, and Glu-358. Arg-360 is an active-site residue.

It belongs to the peptidase M17 family. Mn(2+) serves as cofactor.

The protein localises to the cytoplasm. It catalyses the reaction Release of an N-terminal amino acid, Xaa-|-Yaa-, in which Xaa is preferably Leu, but may be other amino acids including Pro although not Arg or Lys, and Yaa may be Pro. Amino acid amides and methyl esters are also readily hydrolyzed, but rates on arylamides are exceedingly low.. The enzyme catalyses Release of an N-terminal amino acid, preferentially leucine, but not glutamic or aspartic acids.. In terms of biological role, presumably involved in the processing and regular turnover of intracellular proteins. Catalyzes the removal of unsubstituted N-terminal amino acids from various peptides. In Burkholderia orbicola (strain MC0-3), this protein is Probable cytosol aminopeptidase.